A 477-amino-acid polypeptide reads, in one-letter code: Stromelysin-1 (477 aa).

An N-terminal signal peptide occupies residues Met1–Ala17. Residues Tyr18–His99 constitute a propeptide, activation peptide. The Cysteine switch signature appears at Pro90–Val97. Residue Cys92 coordinates Zn(2+). Ca(2+) is bound by residues Asp124 and Asp158. Zn(2+) is bound by residues His168 and Asp170. Ca(2+)-binding residues include Asp175, Gly176, Gly178, and Val180. Zn(2+) is bound at residue His183. 3 residues coordinate Ca(2+): Gly190, Asn192, and Asp194. Position 196 (His196) interacts with Zn(2+). Ca(2+) contacts are provided by Asp198, Asp199, and Glu201. His218 provides a ligand contact to Zn(2+). Glu219 is a catalytic residue. Zn(2+) contacts are provided by His222 and His228. Residues Leu262 to Pro287 form a disordered region. Over residues Pro276 to Gly285 the composition is skewed to pro residues. 4 Hemopexin repeats span residues Pro287–Leu336, Pro337–Pro383, Val385–Ile433, and Asp434–Cys477. Cys290 and Cys477 form a disulfide bridge. Asp297 lines the Ca(2+) pocket. Asp389 and Asp438 together coordinate Ca(2+).

Belongs to the peptidase M10A family. Ca(2+) is required as a cofactor. Requires Zn(2+) as cofactor. In terms of processing, directly cleaved by HTRA2 to produce active form.

The protein resides in the secreted. Its subcellular location is the extracellular space. The protein localises to the extracellular matrix. It is found in the nucleus. It localises to the cytoplasm. It catalyses the reaction Preferential cleavage where P1', P2' and P3' are hydrophobic residues.. With respect to regulation, enzymatic activity is activated by HTRA2 in dopaminergic cells upon mitochondrial stress. Its function is as follows. Metalloproteinase with a rather broad substrate specificity that can degrade fibronectin, laminin, gelatins of type I, III, IV, and V; collagens III, IV, X, and IX, and cartilage proteoglycans. Activates different molecules including growth factors, plasminogen or other matrix metalloproteinases such as MMP9. Once released into the extracellular matrix (ECM), the inactive pro-enzyme is activated by the plasmin cascade signaling pathway. Also acts intracellularly. For example, in dopaminergic neurons, gets activated by the serine protease HTRA2 upon stress and plays a pivotal role in DA neuronal degeneration by mediating microglial activation and alpha-synuclein/SNCA cleavage. In addition, plays a role in immune response and possesses antiviral activity against various viruses such as vesicular stomatitis virus, influenza A virus (H1N1) and human herpes virus 1. Mechanistically, translocates from the cytoplasm into the cell nucleus upon virus infection to influence NF-kappa-B activities. The polypeptide is Stromelysin-1 (MMP3) (Homo sapiens (Human)).